We begin with the raw amino-acid sequence, 388 residues long: Succinate--CoA ligase [ADP-forming] subunit beta (388 aa).

Residues 9-244 enclose the ATP-grasp domain; it reads KQLFAEYGLP…PSQEDEREAH (236 aa). ATP contacts are provided by residues lysine 46, 53-55, glutamate 99, serine 102, and glutamate 107; that span reads GRG. Asparagine 199 and aspartate 213 together coordinate Mg(2+). Residues asparagine 264 and 321 to 323 each bind substrate; that span reads GIV.

The protein belongs to the succinate/malate CoA ligase beta subunit family. In terms of assembly, heterotetramer of two alpha and two beta subunits. Requires Mg(2+) as cofactor.

It catalyses the reaction succinate + ATP + CoA = succinyl-CoA + ADP + phosphate. It carries out the reaction GTP + succinate + CoA = succinyl-CoA + GDP + phosphate. It participates in carbohydrate metabolism; tricarboxylic acid cycle; succinate from succinyl-CoA (ligase route): step 1/1. Functionally, succinyl-CoA synthetase functions in the citric acid cycle (TCA), coupling the hydrolysis of succinyl-CoA to the synthesis of either ATP or GTP and thus represents the only step of substrate-level phosphorylation in the TCA. The beta subunit provides nucleotide specificity of the enzyme and binds the substrate succinate, while the binding sites for coenzyme A and phosphate are found in the alpha subunit. In Aliivibrio salmonicida (strain LFI1238) (Vibrio salmonicida (strain LFI1238)), this protein is Succinate--CoA ligase [ADP-forming] subunit beta.